The chain runs to 1121 residues: Cilia- and flagella-associated protein 70 (1121 aa).

Residues 410-428 (NLKEDKPVKEKDIDGRPRP) show a composition bias toward basic and acidic residues. A disordered region spans residues 410–457 (NLKEDKPVKEKDIDGRPRPGDVQAPSIKSQSSDTPLEGEPPLSHNPEG). TPR repeat units lie at residues 635-668 (SEQLQLFAFEAEVNENFEMAAAYYKERLVREPQN), 669-702 (LDHWLDYGAFCLLTEDNIKAQECFQKALSLNQSH), and 704-736 (HSLLLCGVLAVLLENYEQAEIFFEDATCLEPTN). Disordered regions lie at residues 778–802 (KQKSTGVEDTEERGKRESSLGPWGI) and 836–858 (QSDSQEPILTTQTWDPSISQKPS). TPR repeat units follow at residues 929 to 962 (CEYYLVLAQTHILKKNFAKAEEYLQQAAQMDYLN), 963 to 996 (PNVWGLKGHLYFLSGNHSEAKACYERTISFVVDA), 1000 to 1033 (HFIFLRLGLIYLEEKEYEKAKKTYMQACKRSPSC), 1035 to 1066 (TWLGLGIACYRLEELTEAEDALSEANALNNYN), and 1068 to 1100 (EVWAYLALVCLKVGRQLEAEQAYKYMIKLKLKD).

Belongs to the CFAP70 family. Expressed in testis.

It localises to the cell projection. The protein localises to the cilium. The protein resides in the flagellum. Its subcellular location is the cytoplasm. It is found in the cytoskeleton. It localises to the flagellum basal body. The protein localises to the cilium axoneme. Its function is as follows. Axoneme-binding protein that plays a role in the regulation of ciliary motility and cilium length. The sequence is that of Cilia- and flagella-associated protein 70 from Homo sapiens (Human).